A 972-amino-acid polypeptide reads, in one-letter code: MVRFMYALRKRRLSLLLAMSLLVMCVASVVSPPPQALASGSGGIERVFTDKARYNPGDAVSIRVQAKNGTGSSWSGAARLEIFHLENSVYTSSQSLSLTNGQSTTLTFTWTAPSTDFRGYFVRIDAGTLGQGATAIDVSSDFTKYPRYGYISEFESGETALESKAKVDQLAQDYHINAWQFYDWMWRHDKMIKRTGGSIDSTWLDLFNREISWSTLQNQIDAVHDVNGKAMAYAMIYASRENYSPLGISPTWGIYEDSSHTNQFDVDFGDGSTYLYMSDPQNPNWQNYIHAEYIDSINTAGFDGIHVDQMGQRSNVYDYNGNSIDLSTRFSPFLDQAKSVLSANNPARDNLTYNIVDGTVNGWAVNDVSKNADLDFLYSEIWYLSDSYNQLKNYIEQLRANGGNKAVVLAAYMNYADNAGTRYEAESASMTNVSTNTNHAGYTGSGFVDQFASTGDKVSFAINAPEAGDYSLVFRYGNNTGANSTLNLYVDGNFVQKLYFFNQSSWGTWKHDAWYQVPLTQGAHTVELRYESGNVGAVNLDSLTLGTFDEHSVRLADAMMSASGATHIELGDDNQMLPHEYYPNRSKTMRSSLKNAMKDHYNFITAYENLLFDSDVVPNDTGSQFVNLTGVSASGDGSANTVWYINKRTSDYNIVHLINLLGNDNQWRNTASQPSFQTNLPAKIYIGADETISDVYLASPDLSGGETQELAFTSGTDAGGKYVSFTVPELKYWNMIYMKRTFSVPANDIYEAETAIKSNVSTNTNHAGYTGSGFVDGFSSTNDGVSFVVKSTASDDYALRFRYANGGSDATRDVYVDGKLAGTVSFKSTGSWSTWSYGEITARLEPGHHTIVLWQTSGNTGAINLDHLDLDKTYIWQFDRQIVSVPAGYRITFRTGLPGWVHWGVNGWTGVTDTPLRSNGSLDGNLDHETSIGPFATGTAVDVTFLWDDNNNGILEPSTDRWEGTDFGINVS.

The N-terminal stretch at 1–38 is a signal peptide; the sequence is MVRFMYALRKRRLSLLLAMSLLVMCVASVVSPPPQALA. CBM6 domains are found at residues 421 to 546 and 748 to 871; these read TRYE…LTLG and DIYE…LDLD.

Belongs to the glycosyl hydrolase 66 family. In terms of assembly, monomer.

It catalyses the reaction cyclizes part of a (1-&gt;6)-alpha-D-glucan chain by formation of a (1-&gt;6)-alpha-D-glucosidic bond.. Functionally, produces cycloisomaltooligosaccharide from dextran containing 7, 8 or 9 glucose units. The enzyme is specific for (1-&gt;6)-alpha-D-glucans (dextrans) and, without activity toward (1-&gt;4)-alpha-D-glucans, such as amylose. It also has no activity on oligosaccharides, such as amylopectin and pullulan, containing (1-&gt;6)-alpha-D-glucosidic linkages at branch points. The chain is Cycloisomaltooligosaccharide glucanotransferase from Niallia circulans (Bacillus circulans).